A 162-amino-acid chain; its full sequence is UPF0178 protein RSKD131_2223 (162 aa).

The protein belongs to the UPF0178 family.

The protein is UPF0178 protein RSKD131_2223 of Cereibacter sphaeroides (strain KD131 / KCTC 12085) (Rhodobacter sphaeroides).